A 182-amino-acid chain; its full sequence is ATP-dependent protease subunit HslV (182 aa).

The active site involves Thr-12. Na(+)-binding residues include Ala-167, Cys-170, and Thr-173.

Belongs to the peptidase T1B family. HslV subfamily. A double ring-shaped homohexamer of HslV is capped on each side by a ring-shaped HslU homohexamer. The assembly of the HslU/HslV complex is dependent on binding of ATP.

The protein resides in the cytoplasm. The enzyme catalyses ATP-dependent cleavage of peptide bonds with broad specificity.. Allosterically activated by HslU binding. Protease subunit of a proteasome-like degradation complex believed to be a general protein degrading machinery. This Chlorobium phaeovibrioides (strain DSM 265 / 1930) (Prosthecochloris vibrioformis (strain DSM 265)) protein is ATP-dependent protease subunit HslV.